Here is a 465-residue protein sequence, read N- to C-terminus: Ribulose bisphosphate carboxylase large chain (465 aa).

The residue at position 4 (K4) is an N6,N6,N6-trimethyllysine. X113 and T163 together coordinate substrate. Catalysis depends on K165, which acts as the Proton acceptor. K167 serves as a coordination point for substrate. Mg(2+) contacts are provided by K191, D193, and E194. K191 is subject to N6-carboxylysine. The active-site Proton acceptor is H284. Residues R285, H317, and S369 each contribute to the substrate site.

It belongs to the RuBisCO large chain family. Type I subfamily. In terms of assembly, heterohexadecamer of 8 large chains and 8 small chains; disulfide-linked. The disulfide link is formed within the large subunit homodimers. Mg(2+) serves as cofactor. In terms of processing, the disulfide bond which can form in the large chain dimeric partners within the hexadecamer appears to be associated with oxidative stress and protein turnover.

Its subcellular location is the plastid. It localises to the chloroplast. It carries out the reaction 2 (2R)-3-phosphoglycerate + 2 H(+) = D-ribulose 1,5-bisphosphate + CO2 + H2O. It catalyses the reaction D-ribulose 1,5-bisphosphate + O2 = 2-phosphoglycolate + (2R)-3-phosphoglycerate + 2 H(+). Functionally, ruBisCO catalyzes two reactions: the carboxylation of D-ribulose 1,5-bisphosphate, the primary event in carbon dioxide fixation, as well as the oxidative fragmentation of the pentose substrate in the photorespiration process. Both reactions occur simultaneously and in competition at the same active site. This Cornus obliqua (Silky dogwood) protein is Ribulose bisphosphate carboxylase large chain.